A 962-amino-acid chain; its full sequence is Protein lin-36 (962 aa).

Disordered regions lie at residues 1-53 and 74-99; these read MSEE…ETEG and TSSGEVLDESQVTPTKQASSSQPREE. Over residues 23–40 the composition is skewed to basic and acidic residues; sequence DSHVTVHSVEQDSQHSGE. Residues 74 to 95 are compositionally biased toward polar residues; sequence TSSGEVLDESQVTPTKQASSSQ. Residues 161 to 249 form a THAP-type zinc finger; it reads LTHKPCTVCN…IEAFGVPVAI (89 aa). Composition is skewed to basic and acidic residues over residues 452 to 472 and 534 to 570; these read KAEESAQGTKEQESSQKKHAE and SHEEEHDPTPESVEREPTVSPNDPRERLRLKERDEQF. Disordered regions lie at residues 452 to 575, 612 to 676, 744 to 788, and 932 to 962; these read KAEE…KMVQ, IAAT…PEER, QEKG…SASS, and DPKWRELQQQQQQQQQQQEQFPGQGSSDSQQ. Residues 626 to 637 are compositionally biased toward low complexity; sequence SSEQTPEPTTSQ. Over residues 647 to 658 the composition is skewed to basic and acidic residues; that stretch reads KTKESAVQKVEK. A compositionally biased stretch (low complexity) spans 939 to 951; the sequence is QQQQQQQQQQQEQ. Polar residues predominate over residues 952-962; that stretch reads FPGQGSSDSQQ.

In terms of tissue distribution, expressed in vulval precursor P(3-8).p cells and their descendants, neurons of the head, tail and ventral cord, hypodermal and intestinal cells and germline cells.

It is found in the nucleus. Required to negatively regulate vulval development. Antagonizes Ras-mediated vulval induction. Acts cell autonomously. This Caenorhabditis elegans protein is Protein lin-36 (lin-36).